A 363-amino-acid chain; its full sequence is MSTGQLKRFKGCEYLTHRLVLATLSGTPIRVEGIYPDEADPGVKDYQVSFLRLLEKLTNGSVIEISYTGTSFIYRPGNIIGGRVVHDCPTTKGIGYFLEPILILCLFAKTPTSLTLTGVTSSNEDIGVDVLRTSVLPSLQKRFQVGDELELRILKRGSAPGGGGEVNFLCPVIKESLPPIRLSEFGRVFRIRGIASSTRVSPAFANRLVESARGVLNPFIPDVFIYTDVRRGDECGNSPGYSITLVAETNKGCSYAAEHCGEAGETPEDVGSFCAKKLLEVIESGGCVDPYTQPSTLTGMLLSSEDVNTIVVGQLGITSQLVVFLRDVKALFNCEYRFKELESGQVEMSCLGKGYLNVNRRIQ.

It belongs to the RNA 3'-terminal cyclase family. Type 2 subfamily. In terms of assembly, interacts directly with bms1 and the U3 snoRNA to form a stable subcomplex. Component of the 90S small subunit processome also known as 90S pre-ribosome that consists of the 35S pre-rRNA, early-associating ribosomal proteins most of which are part of the small ribosomal subunit, the U3 snoRNA and associated proteins.

The protein localises to the nucleus. The protein resides in the nucleolus. Functionally, does not have cyclase activity. Plays a role in 40S-ribosomal-subunit biogenesis in the early pre-rRNA processing steps at sites A0, A1 and A2 that are required for proper maturation of the 18S RNA. Rcl1 activates bms1 by promoting GDP/GTP exchange. This is rRNA processing protein rcl1 (rcl1) from Schizosaccharomyces pombe (strain 972 / ATCC 24843) (Fission yeast).